A 180-amino-acid chain; its full sequence is Insertion element IS1296 uncharacterized 21.4 kDa protein (180 aa).

The protein belongs to the IS150/IS1296 orfA family.

The protein is Insertion element IS1296 uncharacterized 21.4 kDa protein of Mycoplasma mycoides subsp. mycoides SC.